The following is a 1249-amino-acid chain: Apoptotic protease-activating factor 1 (1249 aa).

One can recognise a CARD domain in the interval 1 to 90 (MDAKARNCLL…KDLAALLQSG (90 aa)). The NB-ARC domain maps to 106 to 415 (ITSFVRTVLC…LETEEVEDIL (310 aa)). ATP-binding positions include 154 to 161 (GMAGCGKS) and Arg265. A WD 1-1 repeat occupies 613–652 (PHTDAVYHACFSQDGQRIASCGADKTLQVFKAETGEKLLD). The WD 1-2 repeat unit spans residues 655-694 (AHEDEVLCCAFSSDDSYIATCSADKKVKIWDSATGKLVHT). One copy of the WD 1-3 repeat lies at 697–738 (EHSEQVNCCHFTNKSNHLLLATGSNDFFLKLWDLNQKECRNT). One copy of the WD 1-4 repeat lies at 741-780 (GHTNSVNHCRFSPDDELLASCSADGTLRLWDVRSANERKS). One copy of the WD 1-5 repeat lies at 796–837 (DVEVIVKCCSWSADGDKIIVAAKNKVLLFDIHTSGLLAEIHT). The WD 1-6 repeat unit spans residues 838–877 (GHHSTIQYCDFSPYDHLAVIALSQYCVELWNIDSRLKVAD). The stretch at 880–910 (GHLSWVHGVMFSPDGSSFLTASDDQTIRVWE) is one WD 1-7 repeat. The interpropeller linker stretch occupies residues 910–921 (ETKKVCKNSAIV). The WD 2-1 repeat unit spans residues 922–958 (LKQEIDVVFQENETMVLAVDNIRGLQLIAGKTGQIDY). One copy of the WD 2-2 repeat lies at 959–998 (LPEAQVSCCCLSPHLEYVAFGDEDGAIKIIELPNNRVFSS). Residues 1001–1040 (GHKKAVRHIQFTADGKTLISSSEDSVIQVWNWQTGDYVFL) form a WD 2-3 repeat. The WD 2-4 repeat unit spans residues 1042–1080 (AHQETVKDFRLLQDSRLLSWSFDGTVKVWNVITGRIERD). The WD 2-5 repeat unit spans residues 1083 to 1122 (CHQGTVLSCAISSDATKFSSTSADKTAKIWSFDLLSPLHE). A WD 2-6 repeat occupies 1125–1164 (GHNGCVRCSAFSLDGILLATGDDNGEIRIWNVSDGQLLHS). Residues 1176–1213 (THGGWVTDVCFSPDSKTLVSAGGYLKWWNVATGDSSQT) form a WD 2-7 repeat. The WD 2-8 repeat unit spans residues 1214–1249 (FYTNGTNLKKIHVSPDFRTYVTVDNLGILYILQVLE).

Monomer. Oligomerizes to a heptameric ring, known as the apoptosome, upon binding of cytochrome c and dATP. Oligomeric Apaf-1 and pro-caspase-9 bind to each other via their respective NH2-terminal CARD domains and consecutively mature caspase-9 is released from the complex. Interacts with UACA. It may also interact with Bcl-XL. Interacts with APIP. Interacts (via CARD and NACHT domains) with NAIP/BIRC1 (via NACHT domain). Interacts with CIAO2A. As to expression, highly expressed in lung and spleen, weakly in brain and kidney and not detectable in liver.

Its subcellular location is the cytoplasm. In terms of biological role, oligomeric Apaf-1 mediates the cytochrome c-dependent autocatalytic activation of pro-caspase-9 (Apaf-3), leading to the activation of caspase-3 and apoptosis. This activation requires ATP. This Mus musculus (Mouse) protein is Apoptotic protease-activating factor 1 (Apaf1).